A 420-amino-acid polypeptide reads, in one-letter code: Torsin-4A-A (420 aa).

Residues 130–150 form a helical membrane-spanning segment; the sequence is CLLLFIGIVCFQILNAIENLD. 202-209 provides a ligand contact to ATP; that stretch reads GPSGVGKS.

Belongs to the ClpA/ClpB family. Torsin subfamily.

It is found in the membrane. The polypeptide is Torsin-4A-A (tor4a-a) (Xenopus laevis (African clawed frog)).